A 641-amino-acid chain; its full sequence is Threonine--tRNA ligase (641 aa).

Residues 1 to 61 (MIKISFFDNQ…KKNGNLEILT (61 aa)) form the TGS domain. A catalytic region spans residues 240-538 (DHKKINKELD…LVEETKGVFP (299 aa)). Cys-334, His-385, and His-515 together coordinate Zn(2+).

The protein belongs to the class-II aminoacyl-tRNA synthetase family. In terms of assembly, homodimer. Zn(2+) is required as a cofactor.

The protein resides in the cytoplasm. It catalyses the reaction tRNA(Thr) + L-threonine + ATP = L-threonyl-tRNA(Thr) + AMP + diphosphate + H(+). Functionally, catalyzes the attachment of threonine to tRNA(Thr) in a two-step reaction: L-threonine is first activated by ATP to form Thr-AMP and then transferred to the acceptor end of tRNA(Thr). Also edits incorrectly charged L-seryl-tRNA(Thr). The protein is Threonine--tRNA ligase of Aster yellows witches'-broom phytoplasma (strain AYWB).